Consider the following 504-residue polypeptide: Dihydrolipoamide dehydrogenase (504 aa).

The transit peptide at 1–34 directs the protein to the mitochondrion; it reads MLSQRLIGRTAVKSAFRPSGLPTVVNASRWRRGY. FAD-binding positions include 69–78, lysine 87, glycine 151, and 180–182; these read EKRGTLGGTC and TGS. A disulfide bond links cysteine 78 and cysteine 83. NAD(+) contacts are provided by residues 217–224, glutamate 240, valine 275, and glycine 310; that span reads GGGIIGLE. Residues aspartate 351 and 357 to 360 each bind FAD; that span reads MLAH. The active-site Proton acceptor is the histidine 483.

It belongs to the class-I pyridine nucleotide-disulfide oxidoreductase family. As to quaternary structure, eukaryotic pyruvate dehydrogenase (PDH) complexes are organized as a core consisting of the oligomeric dihydrolipoamide acetyl-transferase (E2), around which are arranged multiple copies of pyruvate dehydrogenase (E1), dihydrolipoamide dehydrogenase (E3) and protein X (E3BP) bound by non-covalent bonds. The Chaetomium thermophilum PDH complex contains 60 E2 units, 12 E3BP units, about 20 E1 units, and 12 or more E3 units. The units are organized in 1 E2 60-mer, 4 E3BP trimers, about 20 E1 tetramers, and a maximum of 12 E3 dimers. The E3BP trimers are bound inside the icosahedral core with tetrahedral symmetry. Requires FAD as cofactor.

The protein resides in the mitochondrion. It catalyses the reaction N(6)-[(R)-dihydrolipoyl]-L-lysyl-[protein] + NAD(+) = N(6)-[(R)-lipoyl]-L-lysyl-[protein] + NADH + H(+). Functionally, lipoamide dehydrogenase is a component of the alpha-ketoacid dehydrogenase complexes. This includes the pyruvate dehydrogenase complex, which catalyzes the overall conversion of pyruvate to acetyl-CoA and CO(2). Also acts as a component of the glycine cleavage system (glycine decarboxylase complex), which catalyzes the degradation of glycine. The 10-megadalton pyruvate dehydrogenase complex contains multiple copies of three enzymatic components: pyruvate dehydrogenase (E1), dihydrolipoamide acetyltransferase (E2) and lipoamide dehydrogenase (E3) and catalyzes the overall oxidative decarboxylation of pyruvate to form acetyl-CoA and CO(2). Within the complex, pyruvate and thiamine pyrophosphate (TPP or vitamin B1) are bound by pyruvate dehydrogenase E1 subunits alpha and beta and pyruvate is decarboxylated leading to the 2-carbon hydrohyethyl bound to TPP. The E2 component contains covalently-bound lipoyl cofactors and transfers the hydroxyethyl group from TPP to an oxidized form of covalently bound lipoamide, and the resulting acetyl group is then transferred to free coenzyme A to form acetyl-CoA and reduced dihydrolipoamide-E2. Finally, the flavoprotein dihydrolipoamide dehydrogenase (E3) re-oxidizes the lipoyl group of dihydrolipoamide-E2 to form lipoamide-E2 and NADH. A fourth subunit, E3BP, is responsible for tethering E3 in proximity to the core, forming the entire metabolon. The sequence is that of Dihydrolipoamide dehydrogenase from Chaetomium thermophilum (strain DSM 1495 / CBS 144.50 / IMI 039719) (Thermochaetoides thermophila).